A 462-amino-acid chain; its full sequence is Hyaluronidase-1 (462 aa).

The N-terminal stretch at 1–52 (MLGLTQHAQKVWRMKPFSPEVSPGSSPATAGHLLRISTLFLTLLELAQVCRG) is a signal peptide. Intrachain disulfides connect C71-C361 and C235-C249. 2 N-linked (GlcNAc...) asparagine glycosylation sites follow: N98 and N127. E159 acts as the Proton donor in catalysis. N-linked (GlcNAc...) asparagine glycans are attached at residues N244, N265, and N378. Disulfide bonds link C386–C397, C391–C446, and C448–C457. The EGF-like domain occupies 446–457 (CRCYRGWRGKWC).

Belongs to the glycosyl hydrolase 56 family. In terms of tissue distribution, highly expressed in liver, kidney, lung and skin.

It localises to the secreted. The protein resides in the lysosome. It catalyses the reaction Random hydrolysis of (1-&gt;4)-linkages between N-acetyl-beta-D-glucosamine and D-glucuronate residues in hyaluronate.. Functionally, may have a role in promoting tumor progression. May block the TGFB1-enhanced cell growth. The protein is Hyaluronidase-1 (Hyal1) of Mus musculus (Mouse).